A 133-amino-acid chain; its full sequence is ATP synthase epsilon chain (133 aa).

Belongs to the ATPase epsilon chain family. As to quaternary structure, F-type ATPases have 2 components, CF(1) - the catalytic core - and CF(0) - the membrane proton channel. CF(1) has five subunits: alpha(3), beta(3), gamma(1), delta(1), epsilon(1). CF(0) has three main subunits: a, b and c.

The protein localises to the cellular thylakoid membrane. Functionally, produces ATP from ADP in the presence of a proton gradient across the membrane. This chain is ATP synthase epsilon chain, found in Prochlorococcus marinus (strain MIT 9303).